The sequence spans 427 residues: MESLTLQPIARVDGAINLPGSKSVSNRALLLAALACGKTALTNLLDSDDVRHMLNALSALGINYTLSADRTRCDITGNGGALRAPGALELFLGNAGTAMRPLAAALCLGQNEIVLTGEPRMKERPIGHLVDSLRQGGANIDYLEQENYPPLRLRGGFTGGDIEVDGSVSSQFLTALLMTAPLAPKDTIIRVKGELVSKPYIDITLNLMKTFGVEIANHHYQQFVVKGGQQYHSPGRYLVEGDASSASYFLAAGAIKGGTVKVTGIGRKSMQGDIRFADVLEKMGATITWGDDFIACTRGELHAIDMDMNHIPDAAMTIATTALFAKGTTTLRNIYNWRVKETDRLFAMATELRKVGAEVEEGHDYIRITPPAKLQHADIGTYNDHRMAMCFSLVALSDTPVTILDPKCTAKTFPDYFEQLARMSTPA.

3-phosphoshikimate contacts are provided by Lys22, Ser23, and Arg27. Lys22 lines the phosphoenolpyruvate pocket. Positions 96 and 124 each coordinate phosphoenolpyruvate. 7 residues coordinate 3-phosphoshikimate: Ser169, Ser170, Gln171, Ser197, Asp313, Asn336, and Lys340. Phosphoenolpyruvate is bound at residue Gln171. Asp313 functions as the Proton acceptor in the catalytic mechanism. Residues Arg344, Arg386, and Lys411 each coordinate phosphoenolpyruvate.

The protein belongs to the EPSP synthase family. As to quaternary structure, monomer.

The protein resides in the cytoplasm. The enzyme catalyses 3-phosphoshikimate + phosphoenolpyruvate = 5-O-(1-carboxyvinyl)-3-phosphoshikimate + phosphate. It participates in metabolic intermediate biosynthesis; chorismate biosynthesis; chorismate from D-erythrose 4-phosphate and phosphoenolpyruvate: step 6/7. Functionally, catalyzes the transfer of the enolpyruvyl moiety of phosphoenolpyruvate (PEP) to the 5-hydroxyl of shikimate-3-phosphate (S3P) to produce enolpyruvyl shikimate-3-phosphate and inorganic phosphate. The sequence is that of 3-phosphoshikimate 1-carboxyvinyltransferase from Salmonella typhimurium (strain LT2 / SGSC1412 / ATCC 700720).